A 424-amino-acid chain; its full sequence is Protein ORF114 (424 aa).

It is found in the host cytoplasm. Its function is as follows. Plays a role in per os infectivity in vivo. Facilitates embedding of occlusion-derived viruses (ODVs) into occlusion bodies (OBs). The polypeptide is Protein ORF114 (Lepidoptera (butterflies and moths)).